The primary structure comprises 324 residues: Phospho-N-acetylmuramoyl-pentapeptide-transferase (324 aa).

A run of 10 helical transmembrane segments spans residues 5 to 25, 52 to 72, 77 to 97, 117 to 137, 147 to 167, 176 to 196, 203 to 223, 227 to 247, 250 to 270, and 302 to 322; these read VILF…PIFI, PTMG…VMTM, VSMN…LGFL, LIGQ…QGMP, LSFD…VGGS, LDGL…ILAW, VAIF…FNAH, VFMG…IAIL, LEIL…SVIL, and VVVT…YIEV.

It belongs to the glycosyltransferase 4 family. MraY subfamily. It depends on Mg(2+) as a cofactor.

It is found in the cell membrane. The catalysed reaction is UDP-N-acetyl-alpha-D-muramoyl-L-alanyl-gamma-D-glutamyl-meso-2,6-diaminopimeloyl-D-alanyl-D-alanine + di-trans,octa-cis-undecaprenyl phosphate = di-trans,octa-cis-undecaprenyl diphospho-N-acetyl-alpha-D-muramoyl-L-alanyl-D-glutamyl-meso-2,6-diaminopimeloyl-D-alanyl-D-alanine + UMP. It participates in cell wall biogenesis; peptidoglycan biosynthesis. Catalyzes the initial step of the lipid cycle reactions in the biosynthesis of the cell wall peptidoglycan: transfers peptidoglycan precursor phospho-MurNAc-pentapeptide from UDP-MurNAc-pentapeptide onto the lipid carrier undecaprenyl phosphate, yielding undecaprenyl-pyrophosphoryl-MurNAc-pentapeptide, known as lipid I. This is Phospho-N-acetylmuramoyl-pentapeptide-transferase from Bacillus licheniformis (strain ATCC 14580 / DSM 13 / JCM 2505 / CCUG 7422 / NBRC 12200 / NCIMB 9375 / NCTC 10341 / NRRL NRS-1264 / Gibson 46).